The primary structure comprises 710 residues: MNPLRSIQHNITTPPISGGQPLDAVGPQAQQSHPKRISPSQLSQSAHQALERLSANAEHQRLASLVRNALQDGTFQFQSSNHTQVTYKASICLPADTDTVRTDHLINNELTVQARLNDQSEYDIVSAHLHGSSKAISFDVPSPPPAHGSASSVLSERTHLGMSSVLSQDAVDSSSLETPLVSSPDHSRPPSQPKPVHIGSVRRDSGSLVSDNPVVQALLSFVQADQAFPPQAASIAGVQLEMRSRRDIEQALEELKGAFTVEKAQLMSGGSSSERVDEDVNADIHIPLLLKAIERGAGAFGPGALIEIADGGQISAKAFLASCAPTITSNDDVLSEFINQKLKGDDDLQVRLGAQELLHVATKKEFQLGGLAGSIGVSSILGSAWELGASELLKNAIFGKNFSPSQYALQLAGIDSVPPFIIEAMDSFCVLVIIKGMKGELWSMKDLLPKALKAGAISSAMSFPNNVLQYAGFKSRVADLAANSITTEAAIFGAASGIPPEVKESEELMRAGLFQSMKDGVMAHPGEGMDTKETIERMTRHALDIAPGESTAVKSMGLAAIVGMIPLIASSKATGLVSEQILRIFRNAVFNPIEAIALNALALGGRVNVPGLFDSDNAKHARVAQTILARASQHMEAGDREISAEELHQMLAPRSEFLRHVGSAIVNGMNASFEAIPALVRKLGYGEAPLAERIPYQDLAVPDTSRQPAP.

Positions 1–15 (MNPLRSIQHNITTPP) are enriched in polar residues. Disordered regions lie at residues 1–36 (MNPL…HPKR), 136–155 (ISFD…SVLS), and 173–207 (SSSL…DSGS).

It is found in the secreted. Effector protein involved in non-host recognition and able to elicit hypersensitive response (HR). The sequence is that of Effector protein AvrPphD (avrPphD) from Pseudomonas savastanoi pv. phaseolicola (Pseudomonas syringae pv. phaseolicola).